The sequence spans 146 residues: Large ribosomal subunit protein uL15 (146 aa).

The segment covering 1-18 has biased composition (basic and acidic residues); sequence MKLHELKPSEGSRKERNR. A disordered region spans residues 1–50; that stretch reads MKLHELKPSEGSRKERNRVGRGTGSGNGKTSGRGHKGQKARSGGGVRLGF. The segment covering 21–31 has biased composition (gly residues); it reads RGTGSGNGKTS.

Belongs to the universal ribosomal protein uL15 family. Part of the 50S ribosomal subunit.

In terms of biological role, binds to the 23S rRNA. This chain is Large ribosomal subunit protein uL15, found in Listeria welshimeri serovar 6b (strain ATCC 35897 / DSM 20650 / CCUG 15529 / CIP 8149 / NCTC 11857 / SLCC 5334 / V8).